A 433-amino-acid polypeptide reads, in one-letter code: MKYRIKALLLASSLIITTITSVQAKEELLDRVAAIVNTGVVLESEVNDLLVNIKQQAKKNNQSLPSDKALRIQVMDKLINDSLLSQMGQRMGIQISDAQLDQTLNNMAREDKLTLAQFRQQVIDEGTSYEKYRENVRIELVSGEVSRNSVRRRIFVSPQEVDNLLKVMKEQSSNNVEYHLGHILIEFPADASQEDLAAAKTRATKVVELLNDGSDFAKIAITSSGDANALKGGDLGWKNINEMPTLFSELINDKPKDTIVGPIRTGLGYSIVKVLDIRGRKVVEVEEVKASHILIKPSIILSDEKAKSLLQGFLNQIDAGEATFEELAKEHSEGPTSVRGGDLGWADPKNYDPAFTEALATMKKGGYHKPFRSSFGWHIIKLEDRRMVDATSQLNENRAYQILFNRKYGMESTRWLKETRDEAYIEIFEQDNK.

A signal peptide spans 1 to 24 (MKYRIKALLLASSLIITTITSVQA). 2 PpiC domains span residues 175 to 276 (NVEY…KVLD) and 285 to 384 (VEEV…KLED).

The protein localises to the periplasm. It catalyses the reaction [protein]-peptidylproline (omega=180) = [protein]-peptidylproline (omega=0). In terms of biological role, chaperone involved in the correct folding and assembly of outer membrane proteins. Recognizes specific patterns of aromatic residues and the orientation of their side chains, which are found more frequently in integral outer membrane proteins. May act in both early periplasmic and late outer membrane-associated steps of protein maturation. This Colwellia psychrerythraea (strain 34H / ATCC BAA-681) (Vibrio psychroerythus) protein is Chaperone SurA.